A 212-amino-acid polypeptide reads, in one-letter code: Large ribosomal subunit protein uL4 (212 aa).

Over residues 54–65 (SQKSRSDVSGSN) the composition is skewed to polar residues. The tract at residues 54–85 (SQKSRSDVSGSNKKPWRQKGTGRARSGSVKSP) is disordered.

This sequence belongs to the universal ribosomal protein uL4 family. As to quaternary structure, part of the 50S ribosomal subunit.

One of the primary rRNA binding proteins, this protein initially binds near the 5'-end of the 23S rRNA. It is important during the early stages of 50S assembly. It makes multiple contacts with different domains of the 23S rRNA in the assembled 50S subunit and ribosome. Its function is as follows. Forms part of the polypeptide exit tunnel. The chain is Large ribosomal subunit protein uL4 from Blochmanniella floridana.